The sequence spans 416 residues: Choline/ethanolaminephosphotransferase 1 (416 aa).

Residues 1–20 (MSGHRSTRKRCGDSHPESPV) form a disordered region. A Phosphoserine modification is found at Ser18. The residue at position 40 (Thr40) is a Phosphothreonine. CDP-choline is bound at residue Asn86. 2 helical membrane passes run 89-108 (TIIGLSINICTTILLVFYCP) and 116-133 (LWAYIACACGLFIYQSLD). Asp133 serves as a coordination point for Mg(2+). N-linked (GlcNAc...) asparagine glycosylation occurs at Asn144. Residue Glu151 coordinates CDP-choline. Asp154 is a Mg(2+) binding site. His155 serves as the catalytic Proton acceptor. Transmembrane regions (helical) follow at residues 156 to 176 (GCDSLSTVFVVLGTCIAVQLG), 180 to 199 (DWMFFCCFAGTFMFYCAHWQ), 210 to 230 (IIDVTEVQIFIIIMHLLAVIG), 246 to 267 (MKLLPALCTVAGTIFSCTNYFR), 286 to 306 (VLSPFLHIGSVITLAVMIYKK), 315 to 334 (HPCLYILTFGFVSAKITNKL), 349 to 363 (TAFIGPALLFLDQYF), and 368 to 388 (DEYIVLWIALIFSFFDLIRYC). Mg(2+) is bound at residue Asp158.

The protein belongs to the CDP-alcohol phosphatidyltransferase class-I family. As to quaternary structure, homodimer. It depends on Mg(2+) as a cofactor. The cofactor is Mn(2+).

Its subcellular location is the endoplasmic reticulum membrane. It localises to the nucleus membrane. It catalyses the reaction CDP-ethanolamine + a 1,2-diacyl-sn-glycerol = a 1,2-diacyl-sn-glycero-3-phosphoethanolamine + CMP + H(+). The catalysed reaction is CDP-choline + a 1,2-diacyl-sn-glycerol = a 1,2-diacyl-sn-glycero-3-phosphocholine + CMP + H(+). It carries out the reaction 1-O-alkyl-2-acyl-sn-glycerol + CDP-choline = a 1-O-alkyl-2-acyl-sn-glycero-3-phosphocholine + CMP + H(+). The enzyme catalyses a 1-O-(1Z-alkenyl)-2-acyl-sn-glycerol + CDP-choline = a 1-O-(1Z-alkenyl)-2-acyl-sn-glycero-3-phosphocholine + CMP + H(+). It catalyses the reaction 1,2-dioctanoyl-sn-glycerol + CDP-choline = 1,2-dioctanoyl-sn-glycero-3-phosphocholine + CMP + H(+). The catalysed reaction is 1,2-didecanoyl-sn-glycerol + CDP-choline = 1,2-didecanoyl-sn-glycero-3-phosphocholine + CMP + H(+). It carries out the reaction CDP-choline + 1,2-di-(9Z-octadecenoyl)-sn-glycerol = 1,2-di-(9Z-octadecenoyl)-sn-glycero-3-phosphocholine + CMP + H(+). The enzyme catalyses 1-hexadecanoyl-2-(9Z-octadecenoyl)-sn-glycerol + CDP-choline = 1-hexadecanoyl-2-(9Z-octadecenoyl)-sn-glycero-3-phosphocholine + CMP + H(+). It catalyses the reaction CDP-ethanolamine + 1,2-di-(9Z-octadecenoyl)-sn-glycerol = 1,2-di-(9Z-octadecenoyl)-sn-glycero-3-phosphoethanolamine + CMP + H(+). The catalysed reaction is 1-hexadecanoyl-2-(9Z-octadecenoyl)-sn-glycerol + CDP-ethanolamine = 1-hexadecanoyl-2-(9Z-octadecenoyl)-sn-glycero-3-phosphoethanolamine + CMP + H(+). It carries out the reaction 1-hexadecanoyl-2-(4Z,7Z,10Z,13Z,16Z,19Z-docosahexaenoyl)-sn-glycerol + CDP-choline = 1-hexadecanoyl-2-(4Z,7Z,10Z,13Z,16Z,19Z-docosahexaenoyl)-sn-glycero-3-phosphocholine + CMP + H(+). The enzyme catalyses 1,2-di-(9Z-hexadecenoyl)-sn-glycerol + CDP-choline = 1,2-di-(9Z-hexadecenoyl)-sn-glycero-3-phosphocholine + CMP + H(+). It catalyses the reaction 1,2-di-(9Z-hexadecenoyl)-sn-glycerol + CDP-ethanolamine = 1,2-di-(9Z-hexadecenoyl)-sn-glycero-3-phosphoethanolamine + CMP + H(+). The catalysed reaction is 1-O-hexadecyl-2-acetyl-sn-glycerol + CDP-choline = 1-O-hexadecyl-2-acetyl-sn-glycero-3-phosphocholine + CMP + H(+). It carries out the reaction 1-O-hexadecyl-2-(5Z,8Z,11Z,14Z-eicosatetraenoyl)-sn-glycerol + CDP-choline = 1-O-hexadecyl-2-(5Z,8Z,11Z,14Z)-eicosatetraenoyl-sn-glycero-3-phosphocholine + CMP + H(+). It participates in phospholipid metabolism; phosphatidylethanolamine biosynthesis; phosphatidylethanolamine from ethanolamine: step 3/3. Its pathway is phospholipid metabolism; phosphatidylcholine biosynthesis; phosphatidylcholine from phosphocholine: step 2/2. Catalyzes both phosphatidylcholine and phosphatidylethanolamine biosynthesis from CDP-choline and CDP-ethanolamine, respectively. Involved in protein-dependent process of phospholipid transport to distribute phosphatidyl choline to the lumenal surface. Has a higher cholinephosphotransferase activity than ethanolaminephosphotransferase activity. This chain is Choline/ethanolaminephosphotransferase 1, found in Mus musculus (Mouse).